The primary structure comprises 372 residues: tRNA-specific 2-thiouridylase MnmA (372 aa).

ATP contacts are provided by residues 11-18 and Met37; that span reads GMSGGVDS. The interaction with target base in tRNA stretch occupies residues 97–99; that stretch reads NPD. Residue Cys102 is the Nucleophile of the active site. A disulfide bridge links Cys102 with Cys199. Position 126 (Gly126) interacts with ATP. The tract at residues 149 to 151 is interaction with tRNA; it reads KDQ. Cys199 acts as the Cysteine persulfide intermediate in catalysis. Residues 309 to 310 are interaction with tRNA; it reads RY.

Belongs to the MnmA/TRMU family.

It is found in the cytoplasm. It catalyses the reaction S-sulfanyl-L-cysteinyl-[protein] + uridine(34) in tRNA + AH2 + ATP = 2-thiouridine(34) in tRNA + L-cysteinyl-[protein] + A + AMP + diphosphate + H(+). Its function is as follows. Catalyzes the 2-thiolation of uridine at the wobble position (U34) of tRNA, leading to the formation of s(2)U34. The sequence is that of tRNA-specific 2-thiouridylase MnmA from Staphylococcus aureus (strain MSSA476).